Consider the following 120-residue polypeptide: Fluoride-specific ion channel FluC (120 aa).

3 helical membrane passes run Phe30–Leu50, Val66–Leu86, and Leu96–Val116. Na(+)-binding residues include Gly70 and Thr73.

Belongs to the fluoride channel Fluc/FEX (TC 1.A.43) family.

It is found in the cell inner membrane. The enzyme catalyses fluoride(in) = fluoride(out). With respect to regulation, na(+) is not transported, but it plays an essential structural role and its presence is essential for fluoride channel function. In terms of biological role, fluoride-specific ion channel. Important for reducing fluoride concentration in the cell, thus reducing its toxicity. The protein is Fluoride-specific ion channel FluC of Pseudoalteromonas translucida (strain TAC 125).